The following is a 918-amino-acid chain: Probable UDP-N-acetylglucosamine--peptide N-acetylglucosaminyltransferase SPINDLY (918 aa).

TPR repeat units follow at residues Gly34–Val66, Glu67–Asn99, Cys101–Tyr132, Ala140–Tyr171, Ala172–Tyr205, Asp207–Gly238, Ile239–Tyr271, Asp273–Cys305, Ala306–Phe339, Gln341–Tyr373, and Ala374–Ser407. The catalytic region stretch occupies residues Arg408–Val918. A compositionally biased stretch (polar residues) spans Gln843–Gln853. Residues Gln843 to Pro877 are disordered.

This sequence belongs to the glycosyltransferase 41 family. O-GlcNAc transferase subfamily.

Its subcellular location is the nucleus. The catalysed reaction is L-seryl-[protein] + UDP-N-acetyl-alpha-D-glucosamine = 3-O-(N-acetyl-beta-D-glucosaminyl)-L-seryl-[protein] + UDP + H(+). It catalyses the reaction L-threonyl-[protein] + UDP-N-acetyl-alpha-D-glucosamine = 3-O-(N-acetyl-beta-D-glucosaminyl)-L-threonyl-[protein] + UDP + H(+). The protein operates within protein modification; protein glycosylation. Functionally, probable O-linked N-acetylglucosamine transferase (OGT) involved in various processes such as gibberellin (GA) signaling pathway. OGTs catalyze the addition of nucleotide-activated sugars directly onto the polypeptide through O-glycosidic linkage with the hydroxyl of serine or threonine. Probably acts by adding O-linked sugars to yet unknown proteins. May function as a negative regulator of GA signal transduction during vernalization, inhibiting adventitious shoot elongation during vernalization. The chain is Probable UDP-N-acetylglucosamine--peptide N-acetylglucosaminyltransferase SPINDLY (SPY) from Eustoma exaltatum subsp. russellianum (Bluebells).